We begin with the raw amino-acid sequence, 380 residues long: Probable tRNA-splicing endonuclease subunit sen2 (380 aa).

Residues tyrosine 281, histidine 289, and lysine 325 contribute to the active site.

The protein belongs to the tRNA-intron endonuclease family. Heterotetramer composed of sen2, sen15, sen34 and sen54. Interacts directly with sen54.

The enzyme catalyses pretRNA = a 3'-half-tRNA molecule with a 5'-OH end + a 5'-half-tRNA molecule with a 2',3'-cyclic phosphate end + an intron with a 2',3'-cyclic phosphate and a 5'-hydroxyl terminus.. In terms of biological role, constitutes one of the two catalytic subunit of the tRNA-splicing endonuclease complex, a complex responsible for identification and cleavage of the splice sites in pre-tRNA. It cleaves pre-tRNA at the 5'- and 3'-splice sites to release the intron. The products are an intron and two tRNA half-molecules bearing 2',3'-cyclic phosphate and 5'-OH termini. There are no conserved sequences at the splice sites, but the intron is invariably located at the same site in the gene, placing the splice sites an invariant distance from the constant structural features of the tRNA body. This subunit may anchor the endonuclease complex to the nuclear membrane. Probably carries the active site for 5'-splice site cleavage. The protein is Probable tRNA-splicing endonuclease subunit sen2 (sen2) of Schizosaccharomyces pombe (strain 972 / ATCC 24843) (Fission yeast).